The following is a 563-amino-acid chain: uncharacterized protein (563 aa).

The segment at 30 to 303 (QSIEIQPEEK…EKSPEKQVEI (274 aa)) is disordered. Residues 36 to 56 (PEEKPSEEKQPEEKSSEEKPK) are compositionally biased toward basic and acidic residues. The segment covering 61 to 72 (SAINSEKTQKPI) has biased composition (polar residues). 3 stretches are compositionally biased toward basic and acidic residues: residues 101–115 (TTER…DDKQ), 123–276 (ERGR…EPRP), and 282–303 (EKSP…QVEI).

The protein belongs to the mimivirus L41 family.

This is an uncharacterized protein from Acanthamoeba polyphaga (Amoeba).